The following is a 449-amino-acid chain: Delta(8)-fatty-acid desaturase 1 (449 aa).

The region spanning 7–91 (KKYITNEDLK…IRDFQVSEVS (85 aa)) is the Cytochrome b5 heme-binding domain. The heme site is built by histidine 42 and histidine 65. A run of 2 helical transmembrane segments spans residues 113 to 133 (VTLY…YGVL) and 138 to 158 (VFAH…SAYI). The short motif at 160–164 (HDSGH) is the Histidine box-1 element. The chain crosses the membrane as a helical span at residues 173–195 (YNRFAQLLSGNCLTGISIAWWKW). A Histidine box-2 motif is present at residues 197 to 201 (HNAHH). 3 consecutive transmembrane segments (helical) span residues 255 to 275 (YYPV…LLLF), 284 to 304 (ALNF…VSCL), and 311 to 331 (FFFV…FTLN). Residues 374–378 (QLEHH) carry the Histidine box-3 motif.

This sequence belongs to the fatty acid desaturase type 1 family. It depends on Fe cation as a cofactor. As to expression, highly expressed in flowers. Expressed in roots, leaves, stems and siliques.

It localises to the endoplasmic reticulum membrane. It carries out the reaction an N-acyl-(4R)-4-hydroxysphinganine + 2 Fe(II)-[cytochrome b5] + O2 + 2 H(+) = a (4R,8E)-4-hydroxysphingenine ceramide + 2 Fe(III)-[cytochrome b5] + 2 H2O. It catalyses the reaction an N-acyl-(4R)-4-hydroxysphinganine + 2 Fe(II)-[cytochrome b5] + O2 + 2 H(+) = a (4R,8Z)-4-hydroxysphing-8-enine ceramide + 2 Fe(III)-[cytochrome b5] + 2 H2O. Its function is as follows. Plays a major role as delta(8)-fatty-acid desaturase which introduces a double bond at the 8-position in the long-chain base (LCB) of ceramides with or without a hydroxy group at the 4-position. The enzyme produces both the 8E and 8Z isomers (in a 4:1 ratio). This structural modification contributes to the quantitative partitioning of ceramides between the two major sphingolipid classes, glucosylceramides and glycosylinositolphosphoryl ceramides. Sphingolipids are important membrane components involved in environmental stress responses, such as resistance to chilling, and act as cell signaling molecules. The chain is Delta(8)-fatty-acid desaturase 1 (SLD1) from Arabidopsis thaliana (Mouse-ear cress).